The sequence spans 417 residues: D-amino acid dehydrogenase (417 aa).

Residue 3-17 (IIVLGAGVIGVTSAY) coordinates FAD.

The protein belongs to the DadA oxidoreductase family. The cofactor is FAD.

The catalysed reaction is a D-alpha-amino acid + A + H2O = a 2-oxocarboxylate + AH2 + NH4(+). Its pathway is amino-acid degradation; D-alanine degradation; NH(3) and pyruvate from D-alanine: step 1/1. In terms of biological role, oxidative deamination of D-amino acids. The chain is D-amino acid dehydrogenase from Azorhizobium caulinodans (strain ATCC 43989 / DSM 5975 / JCM 20966 / LMG 6465 / NBRC 14845 / NCIMB 13405 / ORS 571).